The following is a 102-amino-acid chain: ATP-dependent Clp protease adapter protein ClpS (102 aa).

This sequence belongs to the ClpS family. Binds to the N-terminal domain of the chaperone ClpA.

In terms of biological role, involved in the modulation of the specificity of the ClpAP-mediated ATP-dependent protein degradation. This is ATP-dependent Clp protease adapter protein ClpS from Shewanella piezotolerans (strain WP3 / JCM 13877).